The chain runs to 326 residues: 3-dehydrosphinganine reductase TSC10A (326 aa).

At 1 to 7 (MAAISPL) the chain is on the lumenal side. Residues 8–28 (FLLFLIPIIPLSLLAILALIV) traverse the membrane as a helical segment. Residues 29–264 (RPRPIKIPIK…KAMDGIKAGN (236 aa)) lie on the Cytoplasmic side of the membrane. Residues Gly46, Ser48, Ser49, Gly50, Arg71, Lys75, and Asp97 each contribute to the NADPH site. The GXSXG motif lies at 46 to 50 (GGSSG). Residue Ser174 is the Proton donor of the active site. Residue Tyr188 is the Proton acceptor of the active site. NADP(+) is bound by residues Tyr188 and Lys192. Catalysis depends on Lys192, which acts as the Lowers pKa of active site Tyr. Residues 265–285 (FTVSCNFEGFLLSLATTGMSP) traverse the membrane as a helical segment. Residues 286-288 (QRS) lie on the Lumenal side of the membrane. The chain crosses the membrane as a helical span at residues 289 to 309 (FWLAFLEVITAGPIRLIALFF). Topologically, residues 310-326 (QWDWYKAIEKWSKTKTK) are cytoplasmic.

Belongs to the short-chain dehydrogenases/reductases (SDR) family. In terms of tissue distribution, expressed in roots, leaves, stems, flowers and siliques.

The protein resides in the endoplasmic reticulum membrane. The catalysed reaction is sphinganine + NADP(+) = 3-oxosphinganine + NADPH + H(+). It functions in the pathway lipid metabolism; sphingolipid metabolism. Functionally, catalyzes the reduction of 3'-oxosphinganine (3-ketodihydrosphingosine/KDS) to sphinganine (dihydrosphingosine/DHS), the second step of de novo sphingolipid biosynthesis. In plants, sphingolipids seems to play a critical role in mineral ion homeostasis, most likely through their involvement in the ion transport functionalities of membrane systems in the root. Lacks stereospecificity and can also produce L-threo-DHS in addition to D-erythro-DHS. This Arabidopsis thaliana (Mouse-ear cress) protein is 3-dehydrosphinganine reductase TSC10A (TSC10A).